The sequence spans 273 residues: Tryptase (273 aa).

The signal sequence occupies residues 1-18; the sequence is MLKLLLLTLPLLSSLVHA. Positions 19 to 28 are cleaved as a propeptide — activation peptide; the sequence is APGPAMTREG. The 242-residue stretch at 29–270 folds into the Peptidase S1 domain; it reads IVGGQEAHGN…YLDWIHHYVP (242 aa). N-linked (GlcNAc...) asparagine glycosylation is present at Asn-49. A disulfide bridge connects residues Cys-57 and Cys-73. Active-site charge relay system residues include His-72 and Asp-119. The N-linked (GlcNAc...) asparagine glycan is linked to Asn-130. 3 cysteine pairs are disulfide-bonded: Cys-153/Cys-228, Cys-186/Cys-209, and Cys-218/Cys-246. The active-site Charge relay system is the Ser-222.

It belongs to the peptidase S1 family. Tryptase subfamily.

The catalysed reaction is Preferential cleavage: Arg-|-Xaa, Lys-|-Xaa, but with more restricted specificity than trypsin.. Functionally, tryptase is the major neutral protease present in mast cells and is secreted upon the coupled activation-degranulation response of this cell type. May play a role in innate immunity. The sequence is that of Tryptase (Tpsab1) from Mus musculus (Mouse).